A 349-amino-acid polypeptide reads, in one-letter code: Soluble TNF receptor II (349 aa).

An N-terminal signal peptide occupies residues 1 to 19; the sequence is MKSVLYSYILFLSCIIING. 2 TNFR-Cys repeats span residues 31-65 and 67-108; these read KCKD…NTQC and PCGS…NRIC. Cystine bridges form between Cys-32–Cys-43, Cys-44–Cys-57, Cys-47–Cys-65, Cys-68–Cys-83, Cys-86–Cys-100, and Cys-90–Cys-108. 3 N-linked (GlcNAc...) asparagine; by host glycosylation sites follow: Asn-101, Asn-189, and Asn-248.

The protein belongs to the orthopoxvirus OPG002 family.

Functionally, inhibits host immune defense by binding to host TNF and various chemokines in the extracellular space. Binds host CC chemokines (beta chemokines) and CXC chemokines (alpha chemokines). The polypeptide is Soluble TNF receptor II (OPG002) (Camelus).